The sequence spans 221 residues: UPF0502 protein PLES_16071 (221 aa).

This sequence belongs to the UPF0502 family.

This Pseudomonas aeruginosa (strain LESB58) protein is UPF0502 protein PLES_16071.